Reading from the N-terminus, the 908-residue chain is Mycobactin import ATP-binding/permease protein IrtA (908 aa).

Residues 1-329 (MARGFQGVML…SRLLAPLKKP (329 aa)) are Cytoplasmic-facing. Positions 15–124 (ARDHQATVVD…MGSRGFSVPE (110 aa)) constitute an FAD-binding FR-type domain. Residues 16-245 (RDHQATVVDK…AQAYWTEGRA (230 aa)) form a siderophore interaction domain region. Residues 70–73 (RAYT), 87–91 (DMVLH), 97–98 (AS), and 241–243 (TEG) contribute to the FAD site. The tract at residues 245-311 (AMGSSRGETS…GAAQPRTPVR (67 aa)) is disordered. The span at 253–309 (TSTPAKPAAKTAPAKAAAKPAAASGAGTPEHAAAPAAATTGAPQAAPAPGAAQPRTP) shows a compositional bias: low complexity. A helical transmembrane segment spans residues 330-350 (LIVSGVLQALITLIELAPFVL). Residues 331 to 613 (IVSGVLQALI…IGYGLSGIQT (283 aa)) enclose the ABC transmembrane type-1 domain. Residues 351–371 (LVELARLLLGGAEAERLWTLG) lie on the Periplasmic side of the membrane. Residues 372–392 (LTAVSLIGLGAVLAAAMTLWL) form a helical membrane-spanning segment. The Cytoplasmic portion of the chain corresponds to 393-444 (HRVDARFAHELRGRLLTKLSRLPLGWFTRRGSASTKQLVQDDTLALHYLITH). Residues 445-465 (AIPDAVAAVVAPVAVLVYLFV) form a helical membrane-spanning segment. Residues 466–469 (ADWR) are Periplasmic-facing. Residues 470–490 (VALVLFIPVLVYLVLMSVMTI) traverse the membrane as a helical segment. Over 491 to 557 (QSGSKIAQAP…PFVGKKTLMD (67 aa)) the chain is Cytoplasmic. A helical membrane pass occupies residues 558–578 (LVTRPATFLWIILVAGVPLVV). Residues 579–586 (TGRMDPVN) lie on the Periplasmic side of the membrane. A helical membrane pass occupies residues 587 to 607 (LLPFLLLGTTFGARLLGIGYG). The Cytoplasmic segment spans residues 608–908 (LSGIQTGMLA…VSADAVEVGR (301 aa)). The region spanning 654 to 887 (VELDRVSFEY…GGRYRGLWDS (234 aa)) is the ABC transporter domain. 687 to 694 (GPSGSGKS) provides a ligand contact to ATP.

Belongs to the ABC transporter superfamily. Siderophore-Fe(3+) uptake transporter (SIUT) (TC 3.A.1.21) family. As to quaternary structure, forms a heterodimer with IrtB. Requires FAD as cofactor.

Its subcellular location is the cell inner membrane. The ATPase activity of IrtAB is stimulated more than 38-fold in the presence of Fe-MBT, and more than 10-fold in the presence of Fe-cMBT. Functionally, part of the ABC transporter complex IrtAB involved in the import of iron-bound mycobactin (Fe-MBT) and carboxymycobactin (Fe-cMBT). Has a preference for Fe-MBT over Fe-cMBT. Mycobactins are then reduced by the siderophore interaction domain to facilitate iron release in the bacterial cell. Transmembrane domains (TMD) form a pore in the membrane and the ATP-binding domain (NBD) is responsible for energy generation. In Mycolicibacterium thermoresistibile (strain ATCC 19527 / DSM 44167 / CIP 105390 / JCM 6362 / NCTC 10409 / 316) (Mycobacterium thermoresistibile), this protein is Mycobactin import ATP-binding/permease protein IrtA.